Reading from the N-terminus, the 241-residue chain is NH(3)-dependent NAD(+) synthetase (241 aa).

Position 27-34 (Gly27–Ser34) interacts with ATP. Asp33 contributes to the Mg(2+) binding site. A deamido-NAD(+)-binding site is contributed by Arg109. An ATP-binding site is contributed by Thr129. Residue Glu134 coordinates Mg(2+). Residues Lys142 and Asp149 each coordinate deamido-NAD(+). Lys158 and Thr180 together coordinate ATP. Position 231-232 (His231–Lys232) interacts with deamido-NAD(+).

The protein belongs to the NAD synthetase family. In terms of assembly, homodimer.

It catalyses the reaction deamido-NAD(+) + NH4(+) + ATP = AMP + diphosphate + NAD(+) + H(+). Its pathway is cofactor biosynthesis; NAD(+) biosynthesis; NAD(+) from deamido-NAD(+) (ammonia route): step 1/1. Functionally, catalyzes the ATP-dependent amidation of deamido-NAD to form NAD. Uses ammonia as a nitrogen source. The polypeptide is NH(3)-dependent NAD(+) synthetase (Thermoplasma acidophilum (strain ATCC 25905 / DSM 1728 / JCM 9062 / NBRC 15155 / AMRC-C165)).